We begin with the raw amino-acid sequence, 572 residues long: Urease subunit alpha (572 aa).

One can recognise a Urease domain in the interval 134–572 (AGIDTHIHLI…AAMNQLYFFG (439 aa)). Positions 139, 141, and 222 each coordinate Ni(2+). Lysine 222 carries the N6-carboxylysine modification. Residue histidine 224 participates in substrate binding. Ni(2+) is bound by residues histidine 251 and histidine 277. Residue histidine 325 is the Proton donor of the active site. Aspartate 365 is a Ni(2+) binding site.

The protein belongs to the metallo-dependent hydrolases superfamily. Urease alpha subunit family. Heterotrimer of UreA (gamma), UreB (beta) and UreC (alpha) subunits. Three heterotrimers associate to form the active enzyme. Ni cation is required as a cofactor. In terms of processing, carboxylation allows a single lysine to coordinate two nickel ions.

The protein localises to the cytoplasm. It carries out the reaction urea + 2 H2O + H(+) = hydrogencarbonate + 2 NH4(+). It functions in the pathway nitrogen metabolism; urea degradation; CO(2) and NH(3) from urea (urease route): step 1/1. The polypeptide is Urease subunit alpha (Edwardsiella ictaluri (strain 93-146)).